Here is a 383-residue protein sequence, read N- to C-terminus: Queuine tRNA-ribosyltransferase (383 aa).

The Proton acceptor role is filled by D95. Substrate is bound by residues 95–99 (DSGGF), D149, Q195, and G222. An RNA binding region spans residues 253 to 259 (GVGSPDS). D272 acts as the Nucleophile in catalysis. Residues 277–281 (TRIAR) form an RNA binding; important for wobble base 34 recognition region. C310, C312, C315, and H341 together coordinate Zn(2+).

This sequence belongs to the queuine tRNA-ribosyltransferase family. In terms of assembly, homodimer. Within each dimer, one monomer is responsible for RNA recognition and catalysis, while the other monomer binds to the replacement base PreQ1. Requires Zn(2+) as cofactor.

It carries out the reaction 7-aminomethyl-7-carbaguanine + guanosine(34) in tRNA = 7-aminomethyl-7-carbaguanosine(34) in tRNA + guanine. It functions in the pathway tRNA modification; tRNA-queuosine biosynthesis. In terms of biological role, catalyzes the base-exchange of a guanine (G) residue with the queuine precursor 7-aminomethyl-7-deazaguanine (PreQ1) at position 34 (anticodon wobble position) in tRNAs with GU(N) anticodons (tRNA-Asp, -Asn, -His and -Tyr). Catalysis occurs through a double-displacement mechanism. The nucleophile active site attacks the C1' of nucleotide 34 to detach the guanine base from the RNA, forming a covalent enzyme-RNA intermediate. The proton acceptor active site deprotonates the incoming PreQ1, allowing a nucleophilic attack on the C1' of the ribose to form the product. After dissociation, two additional enzymatic reactions on the tRNA convert PreQ1 to queuine (Q), resulting in the hypermodified nucleoside queuosine (7-(((4,5-cis-dihydroxy-2-cyclopenten-1-yl)amino)methyl)-7-deazaguanosine). The protein is Queuine tRNA-ribosyltransferase of Shouchella clausii (strain KSM-K16) (Alkalihalobacillus clausii).